The following is a 318-amino-acid chain: Probable mitochondrial 2-oxoglutarate/malate carrier protein (318 aa).

Solcar repeat units follow at residues 22–111 (QSQL…IKDI), 119–210 (LPFT…TKQL), and 219–309 (DDIK…LNIL). Transmembrane regions (helical) follow at residues 28 to 48 (FVIGGLAGMLSSAFTHPIDSL), 79 to 99 (GFFTLYKGLSASLLRQATYTT), 125 to 145 (IMVGMLSGAGGAIVGTPADLT), 185 to 205 (GCSPNLIRAMFMTAGQVSSYD), 225 to 245 (LIASTTAAFVAAVATSPLDVI), and 281 to 301 (FYKGFNPYFMRLGPQTILTFI).

This sequence belongs to the mitochondrial carrier (TC 2.A.29) family.

It localises to the mitochondrion inner membrane. Its function is as follows. Mitochondrial solute carriers shuttle metabolites, nucleotides, and cofactors through the mitochondrial inner membrane. Catalyzes the transport of 2-oxoglutarate across the inner mitochondrial membrane in an electroneutral exchange for malate or other dicarboxylic acids, and plays an important role in several metabolic processes, including the malate-aspartate shuttle, the oxoglutarate/isocitrate shuttle, in gluconeogenesis from lactate, and in nitrogen metabolism. This Dictyostelium discoideum (Social amoeba) protein is Probable mitochondrial 2-oxoglutarate/malate carrier protein (ucpC).